A 330-amino-acid polypeptide reads, in one-letter code: Putative ADP-ribosyl glycohydrolase L543 (330 aa).

This sequence belongs to the ADP-ribosylglycohydrolase family.

The chain is Putative ADP-ribosyl glycohydrolase L543 from Acanthamoeba polyphaga mimivirus (APMV).